Here is a 389-residue protein sequence, read N- to C-terminus: Putative F-box protein At3g10240 (389 aa).

Residues 1–26 form a disordered region; the sequence is MEQQEEKRKIKAYQRKSKRSKSGSSS. Residues 9–21 show a composition bias toward basic residues; it reads KIKAYQRKSKRSK. Positions 21–66 constitute an F-box domain; that stretch reads KSGSSSIPLDLVSEILLRLPEKSVARFRCVSKPWSSITTEPYFINL.

The chain is Putative F-box protein At3g10240 from Arabidopsis thaliana (Mouse-ear cress).